A 499-amino-acid polypeptide reads, in one-letter code: MGLLSSKRQVSEKGKGWSPVKIRTQDKAPPPLPPLVVFNHLAPPSPNQDPDEEERFVVALFDYAAVNDRDLQVLKGEKLQVLRSTGDWWLARSLVTGREGYVPSNFVAPVETLEVEKWFFRTISRKDAERQLLAPMNKAGSFLIRESESNKGAFSLSVKDITTQGEVVKHYKIRSLDNGGYYISPRITFPTLQALVQHYSKKGDGLCQKLTLPCVNLAPKNLWAQDEWEIPRQSLKLVRKLGSGQFGEVWMGYYKNNMKVAIKTLKEGTMSPEAFLGEANVMKTLQHERLVRLYAVVTREPIYIVTEYMARGCLLDFLKTDEGSRLSLPRLIDMSAQVAEGMAYIERMNSIHRDLRAANILVSETLCCKIADFGLARIIDSEYTAQEGAKFPIKWTAPEAIHFGVFTIKADVWSFGVLLMEIVTYGRVPYPGMSNPEVIRSLEHGYRMPCPETCPPELYNDIITECWRGRPEERPTFEFLQSVLEDFYTATEGQYELQP.

A disordered region spans residues 1–34 (MGLLSSKRQVSEKGKGWSPVKIRTQDKAPPPLPP). Residue G2 is the site of N-myristoyl glycine attachment. In terms of domain architecture, SH3 spans 52–112 (EEERFVVALF…PSNFVAPVET (61 aa)). The region spanning 118–214 (WFFRTISRKD…GLCQKLTLPC (97 aa)) is the SH2 domain. A Protein kinase domain is found at 235 to 488 (LKLVRKLGSG…FLQSVLEDFY (254 aa)). ATP contacts are provided by residues 241 to 249 (LGSGQFGEV) and K263. D354 serves as the catalytic Proton acceptor. Y383 is modified (phosphotyrosine; by autocatalysis).

This sequence belongs to the protein kinase superfamily. Tyr protein kinase family. SRC subfamily. Interacts with CBL (via SH2 domain). Interacts with CD79A and CD79B (via SH2 domain). Post-translationally, phosphorylated on tyrosine residues after antibody-mediated surface engagement of the B-cell antigen receptor (BCR). In terms of processing, ubiquitination of activated BLK by the UBE3A ubiquitin protein ligase leads to its degradation by the ubiquitin-proteasome pathway. Expressed in immature Vgamma2 gamma-delta T-cells (at protein level). Expressed in the B-cell lineage.

The protein localises to the cell membrane. The catalysed reaction is L-tyrosyl-[protein] + ATP = O-phospho-L-tyrosyl-[protein] + ADP + H(+). With respect to regulation, antibody-mediated surface engagement of the B-cell antigen receptor (BCR) which results in the phosphorylation of BLK on tyrosine residues, stimulates the enzymatic activity. Non-receptor tyrosine kinase involved in B-lymphocyte development, differentiation and signaling. B-cell receptor (BCR) signaling requires a tight regulation of several protein tyrosine kinases and phosphatases, and associated coreceptors. Binding of antigen to the B-cell antigen receptor (BCR) triggers signaling that ultimately leads to B-cell activation. Signaling through BLK plays an important role in transmitting signals through surface immunoglobulins and supports the pro-B to pre-B transition, as well as the signaling for growth arrest and apoptosis downstream of B-cell receptor. Specifically binds and phosphorylates CD79A at 'Tyr-188'and 'Tyr-199', as well as CD79B at 'Tyr-196' and 'Tyr-207'. Also phosphorylates the immunoglobulin G receptor FCGR2. With FYN and LYN, plays an essential role in pre-B-cell receptor (pre-BCR)-mediated NF-kappa-B activation. Also contributes to BTK activation by indirectly stimulating BTK intramolecular autophosphorylation. In pancreatic islets, acts as a modulator of beta-cells function through the up-regulation of PDX1 and NKX6-1 and consequent stimulation of insulin secretion in response to glucose. Phosphorylates CGAS, promoting retention of CGAS in the cytosol. The polypeptide is Tyrosine-protein kinase Blk (Blk) (Mus musculus (Mouse)).